The following is a 501-amino-acid chain: O-phosphoseryl-tRNA(Sec) selenium transferase (501 aa).

A tetramerization region spans residues 1 to 44 (MNRESFAAGERLVSPAYVRQGCEARRSHEHLIRLLLEKGKCPEN). Ser14 is modified (phosphoserine). Arg75 provides a ligand contact to pyridoxal 5'-phosphate. The phosphate loop (P-loop) stretch occupies residues 96-106 (GRSGDISAVQP). Positions 97, 98, and 105 each coordinate substrate. TRNA is bound at residue Arg271. Lys284 carries the N6-(pyridoxal phosphate)lysine modification. Arg313 is a substrate binding site. TRNA-binding residues include Arg398 and Lys463. The segment at 474–493 (DKTEDVDIEEMALKLDNVLL) is SLA/LP epitope.

The protein belongs to the SepSecS family. Homotetramer formed by a catalytic dimer and a non-catalytic dimer serving as a binding platform that orients tRNASec for catalysis. Each tetramer binds the CCA ends of two tRNAs which point to the active sites of the catalytic dimer. Requires pyridoxal 5'-phosphate as cofactor. As to expression, primarily expressed in liver, pancreas, kidney and lung. Overexpressed in PHA-stimulated T-cells.

The protein localises to the cytoplasm. The catalysed reaction is O-phospho-L-seryl-tRNA(Sec) + selenophosphate + H2O = L-selenocysteinyl-tRNA(Sec) + 2 phosphate. The protein operates within aminoacyl-tRNA biosynthesis; selenocysteinyl-tRNA(Sec) biosynthesis; selenocysteinyl-tRNA(Sec) from L-seryl-tRNA(Sec) (archaeal/eukaryal route): step 2/2. In terms of biological role, converts O-phosphoseryl-tRNA(Sec) to selenocysteinyl-tRNA(Sec) required for selenoprotein biosynthesis. The sequence is that of O-phosphoseryl-tRNA(Sec) selenium transferase (SEPSECS) from Homo sapiens (Human).